The primary structure comprises 881 residues: NACHT, LRR and PYD domains-containing protein 6 (881 aa).

In terms of domain architecture, Pyrin spans 1-129 (MDAAGASCSS…EHVLRQHAKV (129 aa)). Ser104 bears the Phosphoserine mark. Residues 154–175 (AGEDELLGTSGEPEPERARRSD) are disordered. The NACHT domain maps to 194 to 510 (LTVVLQGPAG…EFLAALSYLL (317 aa)). Position 200–207 (200–207 (GPAGIGKT)) interacts with ATP. An LRR 1 repeat occupies 459–484 (EKDLERLKLQGSQVQTMFLSKKELPG). The interval 579–611 (QSQPKVATVGAEKKDELKDEEAEEEEEEEEEEE) is disordered. Residues 596–611 (KDEEAEEEEEEEEEEE) show a composition bias toward acidic residues. LRR repeat units follow at residues 637–660 (LSSL…VLSY), 749–772 (APSL…LLSQ), and 839–863 (TLSL…TLKP).

It belongs to the NLRP family. As to quaternary structure, homomultimer; forms the NLRP6 inflammasome polymeric complex, a filament composed of homopolymers in response to pathogens and other damage-associated signals. The core of NLRP6 inflammasomes consists of a signal sensor component (NLRP6), an adapter (PYCARD/ASC), which recruits effector pro-inflammatory caspases (CASP1 and CASP4). Interacts (via pyrin domain) with PYCARD/ASC (via pyrin domain); interaction takes place following NLRP6 activation and formation of liquid-liquid phase separation (LLPS), initiating nucleation which greatly enhances further addition of soluble PYCARD/ASC molecules to the speck in a prion-like polymerization process. Clustered PYCARD/ASC nucleates the formation of CASP1 (or possibly CASP4) filaments through the interaction of their respective CARD domains, acting as a platform for CASP1 polymerization. CASP1 filament formation increases local enzyme concentration, resulting in trans-autocleavage and activation. Active CASP1 then processes IL1B and IL18 precursors, leading to the release of mature cytokines in the extracellular milieu and inflammatory response. Interacts with DHX15. Polyubiquitinated with 'Lys-63'-linked chains, promoting the interaction with PYCARD/ASC and formation of the NLRP6 inflammasome. Deubiquitination by CYLD decreases the interaction with PYCARD/ASC. As to expression, detected in several tissues. Expressed in renal epithelial cells in medullary thick ascending limb of Henle, as well as in salivary gland apical epithelium (at protein level). Isoform 1 is widely expressed. Isoform 2 is primarily expressed in kidney (at protein level).

The protein resides in the cytoplasm. The protein localises to the inflammasome. It localises to the cell membrane. Its subcellular location is the nucleus membrane. Its function is as follows. Acts as the sensor component of the NLRP6 inflammasome, which mediates inflammasome activation in response to various pathogen-associated signals, leading to maturation and secretion of IL1B and IL18. Inflammasomes are supramolecular complexes that assemble in the cytosol in response to pathogens and other damage-associated signals and play critical roles in innate immunity and inflammation. Acts as a recognition receptor (PRR): recognizes and binds specific pathogens and other damage-associated signals, such as lipoteichoic acid (LTA), a cell-wall component of Gram-positive bacteria, or double stranded RNA (dsRNA). May also recognize and bind lipopolysaccharide (LPS), a major component of the outer membrane of Gram-negative bacteria; however, LPS is probably not a major activator of the NLRP6 inflammasome. Following LTA- or dsRNA-binding, NLRP6 undergoes liquid-liquid phase separation (LLPS), enhancing multivalent interactions, an essential step for the formation of the NLRP6 inflammasome polymeric complex. The NLRP6 inflammasome acts by promoting recruitment of effector pro-inflammatory caspases (CASP1 and/or CASP4) that catalyze maturation and secretion of IL1B and IL18 in the extracellular milieu. The NLRP6 inflammasome plays a central role in the maintenance of epithelial integrity and host defense against microbial infections in the intestine. Required to restrict infection against Gram-positive bacteria by recognizing lipoteichoic acid (LTA), leading to recruitment of CASP4 and CASP1, and subsequent maturation and secretion of IL1B and IL18. Involved in intestinal antiviral innate immunity together with DHX15: recognizes and binds viral dsRNA to restrict infection by enteric viruses through the interferon pathway and GSDMD-dependent release of IL18. Required to prevent infection by the apicomplexan parasite Cryptosporidium in enterocytes by promoting GSDMD-dependent release of IL18. The NLRP6 inflammasome may also regulate the gut microbiota composition by acting as a sensor of microbiota-associated metabolites to form a PYCARD/ASC-dependent inflammasome for downstream IL18 release and secretion of antimicrobial peptides. Essential for gut mucosal self-renewal and proliferation. Regulate mucus secretion in an inflammasome- and autophagy-dependent manner to prevent invasion by enteric bacteria,. During systemic bacterial infections, the NLRP6 inflammasome negatively regulates neutrophil recruitment and neutrophil extracellular traps (NETs) formation. May promote peripheral nerve recovery following injury via an inflammasome-independent mechanism. In Rattus norvegicus (Rat), this protein is NACHT, LRR and PYD domains-containing protein 6.